The chain runs to 513 residues: ATP synthase subunit alpha (513 aa).

169–176 (GDRQIGKT) serves as a coordination point for ATP.

Belongs to the ATPase alpha/beta chains family. As to quaternary structure, F-type ATPases have 2 components, CF(1) - the catalytic core - and CF(0) - the membrane proton channel. CF(1) has five subunits: alpha(3), beta(3), gamma(1), delta(1), epsilon(1). CF(0) has three main subunits: a(1), b(2) and c(9-12). The alpha and beta chains form an alternating ring which encloses part of the gamma chain. CF(1) is attached to CF(0) by a central stalk formed by the gamma and epsilon chains, while a peripheral stalk is formed by the delta and b chains.

It localises to the cell inner membrane. The enzyme catalyses ATP + H2O + 4 H(+)(in) = ADP + phosphate + 5 H(+)(out). In terms of biological role, produces ATP from ADP in the presence of a proton gradient across the membrane. The alpha chain is a regulatory subunit. This is ATP synthase subunit alpha from Francisella tularensis subsp. mediasiatica (strain FSC147).